A 138-amino-acid chain; its full sequence is NADH-quinone oxidoreductase subunit A 1 (138 aa).

The next 3 membrane-spanning stretches (helical) occupy residues 19–39 (FLPL…LLLA), 74–94 (FYLI…IFAW), and 103–123 (LAGL…LVWL).

Belongs to the complex I subunit 3 family. NDH-1 is composed of 14 different subunits. Subunits NuoA, H, J, K, L, M, N constitute the membrane sector of the complex.

Its subcellular location is the cell inner membrane. The catalysed reaction is a quinone + NADH + 5 H(+)(in) = a quinol + NAD(+) + 4 H(+)(out). Its function is as follows. NDH-1 shuttles electrons from NADH, via FMN and iron-sulfur (Fe-S) centers, to quinones in the respiratory chain. The immediate electron acceptor for the enzyme in this species is believed to be ubiquinone. Couples the redox reaction to proton translocation (for every two electrons transferred, four hydrogen ions are translocated across the cytoplasmic membrane), and thus conserves the redox energy in a proton gradient. The sequence is that of NADH-quinone oxidoreductase subunit A 1 from Geobacter metallireducens (strain ATCC 53774 / DSM 7210 / GS-15).